The following is a 274-amino-acid chain: Triosephosphate isomerase (274 aa).

13–15 (NWK) lines the substrate pocket. H98 (electrophile) is an active-site residue. The active-site Proton acceptor is E170. G176 and S216 together coordinate substrate.

It belongs to the triosephosphate isomerase family. As to quaternary structure, homodimer.

The protein resides in the cytoplasm. The enzyme catalyses D-glyceraldehyde 3-phosphate = dihydroxyacetone phosphate. It functions in the pathway carbohydrate biosynthesis; gluconeogenesis. Its pathway is carbohydrate degradation; glycolysis; D-glyceraldehyde 3-phosphate from glycerone phosphate: step 1/1. Its function is as follows. Involved in the gluconeogenesis. Catalyzes stereospecifically the conversion of dihydroxyacetone phosphate (DHAP) to D-glyceraldehyde-3-phosphate (G3P). This Onion yellows phytoplasma (strain OY-M) protein is Triosephosphate isomerase.